The following is a 1244-amino-acid chain: ATP-dependent helicase/nuclease subunit A (1244 aa).

Residues 4–477 (TKWTEEQLSA…IQLYKNFRSR (474 aa)) form the UvrD-like helicase ATP-binding domain. Residue 25 to 32 (AAAGSGKT) participates in ATP binding. Positions 517–811 (KNVDDIIGGP…RIMSIHKSKG (295 aa)) constitute a UvrD-like helicase C-terminal domain.

The protein belongs to the helicase family. AddA subfamily. In terms of assembly, heterodimer of AddA and AddB/RexB. Requires Mg(2+) as cofactor.

It carries out the reaction Couples ATP hydrolysis with the unwinding of duplex DNA by translocating in the 3'-5' direction.. The enzyme catalyses ATP + H2O = ADP + phosphate + H(+). Functionally, the heterodimer acts as both an ATP-dependent DNA helicase and an ATP-dependent, dual-direction single-stranded exonuclease. Recognizes the chi site generating a DNA molecule suitable for the initiation of homologous recombination. The AddA nuclease domain is required for chi fragment generation; this subunit has the helicase and 3' -&gt; 5' nuclease activities. This Clostridium botulinum (strain Alaska E43 / Type E3) protein is ATP-dependent helicase/nuclease subunit A.